The following is a 1028-amino-acid chain: MSDTPSLTLSALLARRDWENPVVTQWNRLAAHAPLHSWRNEPSARDDAGSARRQTLNGLWRFSYFTAPEQVPQAWVTEDCADAVAMPVPSNWQMQGFDTPIYTNVTYPIPVNPPFVPQENPTGCYSLTFEVDDAWLQSGQTRIIFDGVNSAFHLWCNGQWIGYSQDSRLPAEFDLSAALRPGQNRLAVMVLRWCDGSYLEDQDMWRMSGIFRDVTLLHKPETQIADYHVVTDLNAELDRAVLKVDVTLAGAGFADGEVVFTLWRKGEKCASVSRQPGSAIVDERGSWAERLTVTIPVETPALWSAETPELYRLTMALLNPQGEVLEIEACDVGFRRVEISNGLLKLNGKPLLIRGVNRHEHHSENGQVMDEATMRRDIETMKQHSFNAVRCSHYPNHPLWYQLCDRYGLYVVDEANIETHGMVPMSRLADDPRWLPAMSERVTRMVQRDRNHPSIIIWSLGNESGHGANHDALYRWLKTTDPTRPVQYEGGGANTAATDIVCPMYARVDRDQPFPAVPKWSIKKWIGMPDETRPLILCEYAHAMGNSFGGFAKYWQAFRSHPRLQGGFVWDWVDQALTKRDEDGNTFWAYGGDFGDKPNDRQFCLNGLVFPDRTPHPALYEAHGPQQFFTFTRVSTSPLVIEVQSGYLFRHTDNEVLNWTVARDGDVLVAGEVTLAMVPEGTQRLEIALPELNAGPGEVWLNVEVRQPRATPWSPAAIAAAGSSGRFRLRSLLLRQPRRRAAVLTQTDRILEIAHRQQRWQFDRASGNLTQWWRNGVETLLSPLTDNVSRAPLDNDIGVSEATKIDPNAWVERWKAAGMYDLTPRVLHCEAEQHAGEVVVTTQHVLEYRGKALFLSRKVWRIDEQGVLHGDIQVDMASDIPEPARIGLSVHLAETPENVRWLGLGPHENYPDRKLAAQQGRWTLPLEAMHTPYIFPTENGLRCDTRELVVGMHQLNGHFHFSVSRYSQQQLRETTHHHLLREEPGCWLNLDAFHMGVGGDDSWSPSVSPEFILQTRQLRYTFSWQQNP.

Positions 104 and 203 each coordinate substrate. Aspartate 203 is a Na(+) binding site. Mg(2+) contacts are provided by glutamate 418, histidine 420, and glutamate 463. Residues glutamate 463 and 539-542 (EYAH) contribute to the substrate site. Catalysis depends on glutamate 463, which acts as the Proton donor. Glutamate 539 (nucleophile) is an active-site residue. Mg(2+) is bound at residue asparagine 599. Residues phenylalanine 603 and asparagine 606 each coordinate Na(+). Positions 606 and 1003 each coordinate substrate.

The protein belongs to the glycosyl hydrolase 2 family. As to quaternary structure, homotetramer. The cofactor is Mg(2+). Na(+) serves as cofactor.

It carries out the reaction Hydrolysis of terminal non-reducing beta-D-galactose residues in beta-D-galactosides.. This Enterobacter cloacae protein is Beta-galactosidase.